The chain runs to 956 residues: Zinc fingers and homeoboxes protein 3 (956 aa).

A required for nuclear localization region spans residues 1 to 107 (MASKRKSTTP…SEHTDFNKDP (107 aa)). The disordered stretch occupies residues 22–66 (DASMEAQPAETLPEGPQQDLPPEASAASSEAAQNPSSTDGSTLAN). Positions 42–58 (PPEASAASSEAAQNPSS) are enriched in low complexity. 2 C2H2-type zinc fingers span residues 77–100 (YSCK…NSEH) and 109–132 (FVCS…ATCH). Positions 242-488 (ASASSAKNPH…LLTACPSITS (247 aa)) are required for homodimerization and interaction with NFYA. Positions 303–502 (LSSIPTYNAA…DASIYKNKKS (200 aa)) are required for repressor activity. 2 consecutive DNA-binding regions (homeobox) follow at residues 304 to 363 (SSIP…GISW) and 494 to 553 (ASIY…RNLK). The required for nuclear localization stretch occupies residues 497 to 555 (YKNKKSHEQLSALKGSFCRNQFPGQSEVEHLTKVTGLSTREVRKWFSDRRYHCRNLKGS). Disordered stretches follow at residues 598-618 (PSAK…KYKE) and 666-695 (KVNA…GEED). 2 positions are modified to phosphoserine: S599 and S604. The homeobox 3 DNA-binding region spans 612 to 671 (TPTKYKERAPEQLRALESSFAQNPLPLDEELDRLRSETKMTRREIDSWFSERRKKVNAEE). Over residues 666-677 (KVNAEETKKAEE) the composition is skewed to basic and acidic residues. The span at 679-695 (ASQEEEEAAEDEGGEED) shows a compositional bias: acidic residues. Phosphoserine occurs at positions 680, 708, and 723. DNA-binding regions (homeobox) lie at residues 764 to 823 (PGKV…KNGQ) and 835 to 894 (FPPG…TRAV). The interval 890 to 956 (ETRAVADTGS…PQAGRQLETD (67 aa)) is disordered. A phosphoserine mark is found at S927 and S946.

It belongs to the ZHX family. In terms of assembly, homodimer (via homeobox domain 1). Heterodimer with ZHX1 (via homeobox domain 1). Heterodimer with ZHX2 (via homeobox domain 1). Heterodimerization with ZHX1 is a prerequisite for repressor activity. Interacts with NFYA. Widely expressed. High expression in kidney. Expressed during osteogenic differentiation.

Its subcellular location is the nucleus. Acts as a transcriptional repressor. Involved in the early stages of mesenchymal stem cell (MSC) osteogenic differentiation. Is a regulator of podocyte gene expression during primary glomerula disease. Binds to promoter DNA. The chain is Zinc fingers and homeoboxes protein 3 (ZHX3) from Homo sapiens (Human).